The sequence spans 318 residues: Zinc chaperone YjiA (318 aa).

Residue 11 to 19 participates in GTP binding; sequence GFLGAGKTT. Glu37, Glu42, Cys66, Glu74, and His114 together coordinate Zn(2+). The CXCC motif signature appears at 64–67; sequence CICC. Asp161 contributes to the GTP binding site. Residues Glu167, His170, and His187 each coordinate Zn(2+). In terms of domain architecture, CobW C-terminal spans 224-315; that stretch reads ISSIVVELDY…EEEIRAAFAG (92 aa).

The protein belongs to the SIMIBI class G3E GTPase family. ZNG1 subfamily. As to quaternary structure, monomer in the apo form. Metal binding induces oligomerization. Forms homodimers and higher oligomers.

The enzyme catalyses GTP + H2O = GDP + phosphate + H(+). Its activity is regulated as follows. GTPase activity is inhibited by metal binding. Activity is decreased in the presence of Co(II) or Ni(II), and is completely inhibited in the presence of Zn(II). Its function is as follows. Zinc chaperone that directly transfers zinc cofactor to target proteins, thereby activating them. Zinc is transferred from the CXCC motif in the GTPase domain to the zinc binding site in target proteins in a process requiring GTP hydrolysis. In Escherichia coli (strain K12), this protein is Zinc chaperone YjiA (yjiA).